Reading from the N-terminus, the 1047-residue chain is Ribonucleoside-diphosphate reductase subunit alpha (1047 aa).

3 consecutive ATP-cone domains span residues 9–111, 118–219, and 237–327; these read CTIV…KAHR, LSVV…ARVR, and VEVL…EALG. Substrate contacts are provided by residues Thr442, 457 to 458, Gly486, 670 to 674, and 857 to 861; these read SC, NLCTE, and PTATI. Residues Cys458 and Cys687 are joined by a disulfide bond. Asn670 serves as the catalytic Proton acceptor. Cys672 (cysteine radical intermediate) is an active-site residue. The active-site Proton acceptor is the Glu674.

This sequence belongs to the ribonucleoside diphosphate reductase large chain family. Tetramer of two alpha and two beta subunits.

It carries out the reaction a 2'-deoxyribonucleoside 5'-diphosphate + [thioredoxin]-disulfide + H2O = a ribonucleoside 5'-diphosphate + [thioredoxin]-dithiol. Under complex allosteric control mediated by deoxynucleoside triphosphates and ATP binding. The type of nucleotide bound at the specificity site determines substrate preference. It seems probable that ATP makes the enzyme reduce CDP and UDP, dGTP favors ADP reduction and dTTP favors GDP reduction. Its function is as follows. Provides the precursors necessary for DNA synthesis. Catalyzes the biosynthesis of deoxyribonucleotides from the corresponding ribonucleotides. This is Ribonucleoside-diphosphate reductase subunit alpha (nrdA) from Chlamydia trachomatis serovar D (strain ATCC VR-885 / DSM 19411 / UW-3/Cx).